A 314-amino-acid chain; its full sequence is Probable 5-dehydro-4-deoxyglucarate dehydratase (314 aa).

The protein belongs to the DapA family.

It catalyses the reaction 5-dehydro-4-deoxy-D-glucarate + H(+) = 2,5-dioxopentanoate + CO2 + H2O. The protein operates within carbohydrate acid metabolism; D-glucarate degradation; 2,5-dioxopentanoate from D-glucarate: step 2/2. This is Probable 5-dehydro-4-deoxyglucarate dehydratase from Bradyrhizobium diazoefficiens (strain JCM 10833 / BCRC 13528 / IAM 13628 / NBRC 14792 / USDA 110).